Reading from the N-terminus, the 258-residue chain is MVALRLIPCLDVARGRVVKGINFVGLRDAGDPVELACRYSHAGADELVFLDIAASHEGRATLVDLVRRTAESVTIPFTVGGGISSVEGITELLRAGADKVSLNSSAVGRPELVREGAQRFGRQCIVVAIDARRRNSGTDGWDVYVKGGRENTGLDVVRWAQQVTELGAGEILLTSMDGDGTQAGYDLQLTRAVAAAVSVPVIASGGAGCLDHIAAALETGPEGGHASAALLASLLHDGVLTVEQIKADLLARGLKIRP.

Catalysis depends on residues D11 and D130.

Belongs to the HisA/HisF family. Heterodimer of HisH and HisF.

The protein localises to the cytoplasm. The enzyme catalyses 5-[(5-phospho-1-deoxy-D-ribulos-1-ylimino)methylamino]-1-(5-phospho-beta-D-ribosyl)imidazole-4-carboxamide + L-glutamine = D-erythro-1-(imidazol-4-yl)glycerol 3-phosphate + 5-amino-1-(5-phospho-beta-D-ribosyl)imidazole-4-carboxamide + L-glutamate + H(+). The protein operates within amino-acid biosynthesis; L-histidine biosynthesis; L-histidine from 5-phospho-alpha-D-ribose 1-diphosphate: step 5/9. In terms of biological role, IGPS catalyzes the conversion of PRFAR and glutamine to IGP, AICAR and glutamate. The HisF subunit catalyzes the cyclization activity that produces IGP and AICAR from PRFAR using the ammonia provided by the HisH subunit. In Synechococcus sp. (strain CC9902), this protein is Imidazole glycerol phosphate synthase subunit HisF.